Consider the following 360-residue polypeptide: D-xylose 1-dehydrogenase [NADP(+)] (360 aa).

This sequence belongs to the Gfo/Idh/MocA family. As to quaternary structure, homotretramer.

It carries out the reaction D-xylofuranose + NADP(+) = D-xylono-1,4-lactone + NADPH + H(+). NADP-dependent D-xylose dehydrogenase involved in the degradation of D-xylose, a major component of hemicelluloses such as xylan. In addition to D-xylose, oxidizes D-ribose at similar kinetic constants, whereas D-glucose is oxidized with about 70-fold lower catalytic efficiency. This Haloarcula marismortui (strain ATCC 43049 / DSM 3752 / JCM 8966 / VKM B-1809) (Halobacterium marismortui) protein is D-xylose 1-dehydrogenase [NADP(+)] (gfo6).